The following is a 953-amino-acid chain: Isoleucine--tRNA ligase (953 aa).

Residues 58–68 (PYANGNIHLGH) carry the 'HIGH' region motif. Glu565 is a binding site for L-isoleucyl-5'-AMP. A 'KMSKS' region motif is present at residues 606-610 (KMSKS). ATP is bound at residue Lys609. Zn(2+)-binding residues include Cys916, Cys919, Cys936, and Cys939.

The protein belongs to the class-I aminoacyl-tRNA synthetase family. IleS type 1 subfamily. In terms of assembly, monomer. Zn(2+) serves as cofactor.

Its subcellular location is the cytoplasm. The catalysed reaction is tRNA(Ile) + L-isoleucine + ATP = L-isoleucyl-tRNA(Ile) + AMP + diphosphate. Its function is as follows. Catalyzes the attachment of isoleucine to tRNA(Ile). As IleRS can inadvertently accommodate and process structurally similar amino acids such as valine, to avoid such errors it has two additional distinct tRNA(Ile)-dependent editing activities. One activity is designated as 'pretransfer' editing and involves the hydrolysis of activated Val-AMP. The other activity is designated 'posttransfer' editing and involves deacylation of mischarged Val-tRNA(Ile). The chain is Isoleucine--tRNA ligase from Colwellia psychrerythraea (strain 34H / ATCC BAA-681) (Vibrio psychroerythus).